We begin with the raw amino-acid sequence, 705 residues long: Polyribonucleotide nucleotidyltransferase (705 aa).

Asp487 and Asp493 together coordinate Mg(2+). The KH domain occupies 554–613 (PKILTMTINPDKIRDVIGPSGKQINKIIEETGVKIDIEQDGTIFISSTDESGNQKAKKII). One can recognise an S1 motif domain in the interval 623-691 (GQLYLGKVKR…KQGRVNLSRK (69 aa)).

Belongs to the polyribonucleotide nucleotidyltransferase family. Homodimer. Component of a possible RNA degradosome complex composed of rny, rnjA, rnjB, pnp, pfkA and eno (although rnjA and rnjB's presence is unclear). RNA helicase CshA may also be a member of this complex. Mg(2+) is required as a cofactor.

Its subcellular location is the cytoplasm. The enzyme catalyses RNA(n+1) + phosphate = RNA(n) + a ribonucleoside 5'-diphosphate. In terms of biological role, involved in mRNA degradation. Catalyzes the phosphorolysis of single-stranded polyribonucleotides processively in the 3'- to 5'-direction. Necessary for competence development in Bacillus subtilis. May be necessary for modification of the srfA transcript (stabilization or translation activation). Involved in processing precursor type I toxin-antitoxin RNAs antitoxin SR4 and SR5 RNAs to their mature forms. The polypeptide is Polyribonucleotide nucleotidyltransferase (Bacillus subtilis (strain 168)).